A 61-amino-acid polypeptide reads, in one-letter code: Phosphoenolpyruvate synthase (61 aa).

The protein belongs to the PEP-utilizing enzyme family. The cofactor is Mg(2+).

The enzyme catalyses pyruvate + ATP + H2O = phosphoenolpyruvate + AMP + phosphate + 2 H(+). It participates in carbohydrate biosynthesis; gluconeogenesis. Catalyzes the phosphorylation of pyruvate to phosphoenolpyruvate. This chain is Phosphoenolpyruvate synthase (ppsA), found in Enterobacter agglomerans (Erwinia herbicola).